Reading from the N-terminus, the 591-residue chain is L-fucose isomerase (591 aa).

Residues Glu337 and Asp361 each act as proton acceptor in the active site. 3 residues coordinate Mn(2+): Glu337, Asp361, and His528.

It belongs to the L-fucose isomerase family. In terms of assembly, homohexamer. The cofactor is Mn(2+).

The protein localises to the cytoplasm. The catalysed reaction is L-fucose = L-fuculose. It participates in carbohydrate degradation; L-fucose degradation; L-lactaldehyde and glycerone phosphate from L-fucose: step 1/3. Its function is as follows. Converts the aldose L-fucose into the corresponding ketose L-fuculose. The polypeptide is L-fucose isomerase (Klebsiella pneumoniae (strain 342)).